The sequence spans 284 residues: Bifunctional protein FolD (284 aa).

Residues 166-168 and Ile232 contribute to the NADP(+) site; that span reads GAS.

The protein belongs to the tetrahydrofolate dehydrogenase/cyclohydrolase family. Homodimer.

The catalysed reaction is (6R)-5,10-methylene-5,6,7,8-tetrahydrofolate + NADP(+) = (6R)-5,10-methenyltetrahydrofolate + NADPH. It catalyses the reaction (6R)-5,10-methenyltetrahydrofolate + H2O = (6R)-10-formyltetrahydrofolate + H(+). It functions in the pathway one-carbon metabolism; tetrahydrofolate interconversion. Catalyzes the oxidation of 5,10-methylenetetrahydrofolate to 5,10-methenyltetrahydrofolate and then the hydrolysis of 5,10-methenyltetrahydrofolate to 10-formyltetrahydrofolate. This Shewanella frigidimarina (strain NCIMB 400) protein is Bifunctional protein FolD.